Reading from the N-terminus, the 394-residue chain is S-adenosylmethionine synthase (394 aa).

A Mg(2+)-binding site is contributed by glutamate 10. Histidine 16 lines the ATP pocket. Glutamate 44 is a K(+) binding site. L-methionine contacts are provided by glutamate 57 and glutamine 100. Residues 168–170, 236–239, aspartate 247, 253–254, alanine 270, lysine 274, and lysine 278 contribute to the ATP site; these read DGK, SGRF, and RK. Aspartate 247 contributes to the L-methionine binding site. Lysine 278 is a binding site for L-methionine.

The protein belongs to the AdoMet synthase family. Homotetramer. It depends on Mn(2+) as a cofactor. Mg(2+) is required as a cofactor. The cofactor is Co(2+). K(+) serves as cofactor.

The protein localises to the cytoplasm. The enzyme catalyses L-methionine + ATP + H2O = S-adenosyl-L-methionine + phosphate + diphosphate. It functions in the pathway amino-acid biosynthesis; S-adenosyl-L-methionine biosynthesis; S-adenosyl-L-methionine from L-methionine: step 1/1. In terms of biological role, catalyzes the formation of S-adenosylmethionine from methionine and ATP. The reaction comprises two steps that are both catalyzed by the same enzyme: formation of S-adenosylmethionine (AdoMet) and triphosphate, and subsequent hydrolysis of the triphosphate. The sequence is that of S-adenosylmethionine synthase (METK) from Medicago truncatula (Barrel medic).